A 575-amino-acid polypeptide reads, in one-letter code: Arginine--tRNA ligase (575 aa).

Residues 131-141 (ANPTGPLHVGH) carry the 'HIGH' region motif.

Belongs to the class-I aminoacyl-tRNA synthetase family. As to quaternary structure, monomer.

The protein localises to the cytoplasm. The catalysed reaction is tRNA(Arg) + L-arginine + ATP = L-arginyl-tRNA(Arg) + AMP + diphosphate. This is Arginine--tRNA ligase from Jannaschia sp. (strain CCS1).